The chain runs to 367 residues: Putative threonine-phosphate decarboxylase (367 aa).

O-phospho-L-threonine-binding positions include 12–13 (HG), asparagine 29, and asparagine 152. Lysine 213 carries the N6-(pyridoxal phosphate)lysine modification. O-phospho-L-threonine-binding residues include arginine 320 and arginine 334.

Belongs to the class-II pyridoxal-phosphate-dependent aminotransferase family. The cofactor is pyridoxal 5'-phosphate.

It catalyses the reaction O-phospho-L-threonine + H(+) = (R)-1-aminopropan-2-yl phosphate + CO2. It functions in the pathway cofactor biosynthesis; adenosylcobalamin biosynthesis. Functionally, decarboxylates L-threonine-O-3-phosphate to yield (R)-1-amino-2-propanol O-2-phosphate, the precursor for the linkage between the nucleotide loop and the corrin ring in cobalamin. The chain is Putative threonine-phosphate decarboxylase (cobD) from Caldanaerobacter subterraneus subsp. tengcongensis (strain DSM 15242 / JCM 11007 / NBRC 100824 / MB4) (Thermoanaerobacter tengcongensis).